The sequence spans 210 residues: Large ribosomal subunit protein bL17 (210 aa).

The disordered stretch occupies residues 177-210 (TRSAQRPAFEQDAPESDSAPEAEAKTEEETASAN).

Belongs to the bacterial ribosomal protein bL17 family. As to quaternary structure, part of the 50S ribosomal subunit. Contacts protein L32.

This chain is Large ribosomal subunit protein bL17, found in Rhodopirellula baltica (strain DSM 10527 / NCIMB 13988 / SH1).